Reading from the N-terminus, the 62-residue chain is Conotoxin Qc5.1 (62 aa).

The first 22 residues, 1–22, serve as a signal peptide directing secretion; that stretch reads MRCVPVFIILLLLSPSAPSVDA. Positions 23–48 are excised as a propeptide; that stretch reads HPMTKDDVPQASFHDDAKRTLQVPWM. At V60 the chain carries Valine amide.

The protein belongs to the conotoxin T superfamily. Contains 2 disulfide bonds that can be either 'C1-C3, C2-C4' or 'C1-C4, C2-C3', since these disulfide connectivities have been observed for conotoxins with cysteine framework V (for examples, see AC P0DQQ7 and AC P81755). As to expression, expressed by the venom duct.

The protein localises to the secreted. The protein is Conotoxin Qc5.1 of Conus quercinus (Oak cone).